A 612-amino-acid polypeptide reads, in one-letter code: MSNSHPLRPFTAVGEIDHVHILSEHIGALLIGEEYGDVTFVVEKKRFPAHRVILAARCQYFRALLYGGMRESQPEAEIPLQDTTAEAFTMLLRYIYTGRATLTDEKEEVLLDFLSLAHKYGFPELEDSTSEYLCTILNIQNVCMTFDVASLYSLPKLTCMCCMFMDRNAQEVLASDGFLSLSKTALLNIVLRDSFAAPEKDIFLALLNWCKHNAKENHAEIMQAVRLPLMSLTELLNVVRPSGLLSPDAILDAIKVRSESRDMDLNYRGMLIPEENIATMKYGAQVVKGELKSALLDGDTQNYDLDHGFSRHPIDDDCRSGIEIKLGQPSIINHIRLLLWDRDSRSYSYFIEVSMDELDWIRVIDHSHYLCRSWQKLYFPARVCRYIRIVGTHNTVNKIFHIVAFECMFTNKAFTLEKGLIAPMENVATIADCASVIEGVSRSRNALLNGDTKNYDWDSGYTCHQLGSGAIVVQLAQPYMIGSIRLLLWDCDDRSYSYYVEVSTNQQQWTMVADRTKVSCKSWQSVTFERQPASFIRIVGTHNTANEVFHCVHFECPEQQSTQKEDSSEEPGTGDLSTPSQQLDPHAPRAPSASSLPPSPGPNLHSPNQQNQ.

Positions G36–D104 constitute a BTB domain. The BACK domain maps to V142–R240. The interval Q559 to Q612 is disordered. Low complexity predominate over residues R589–Q612.

As to expression, detected throughout the gray matter of the spinal cord including the motor neurons (at protein level). In the brain, detected in the neurons of the hippocampus and in the Purkinje cells of the cerebellum (at protein level). Also detected in the terospenial cortex, bed nucleus of the stria terminalis (BST) and the ventrolateral thalamus (VL) (at protein level).

This chain is BTB/POZ domain-containing protein 9 (Btbd9), found in Rattus norvegicus (Rat).